A 78-amino-acid chain; its full sequence is MARHCELTGKKANNAFSISHSHRRTKRLQHANLQWKRIWWEEGKRWVKLRLSTKAIKTLEKKGLASMAKEAGINLNQY.

Belongs to the bacterial ribosomal protein bL28 family.

The protein is Large ribosomal subunit protein bL28 of Gloeothece citriformis (strain PCC 7424) (Cyanothece sp. (strain PCC 7424)).